Reading from the N-terminus, the 155-residue chain is Probable methanogenesis regulatory protein FilR2 (155 aa).

The 125-residue stretch at 18 to 142 (IILLVEDNNA…DLKRTVEEIK (125 aa)) folds into the Response regulatory domain. 4-aspartylphosphate is present on Asp-75.

Post-translationally, phosphorylated by FilI.

Its function is as follows. Member of the two-component regulatory system FilI/FilRs, which is involved in the regulation of methanogenesis. In Methanothrix harundinacea (strain 6Ac) (Methanosaeta harundinacea), this protein is Probable methanogenesis regulatory protein FilR2.